Consider the following 239-residue polypeptide: MNSIEFPLLDRTTPNSVISTTLNDLSNWSRLSSLWPLLYGTSCCFIEFASLIGSRFDFDRYGLVPRSSPRQADLILTAGTVTMKMAPSLVRLYEQMPEPKYVIAMGACTITGGMFSTDSYSTVRGVDKLIPVDVYLPGCPPKPEAVIDAITKLRKKLSREISEDRMGSQRENRCFTTNHKFYVRRSTHTGNYDQGLLYQSPPTAEIPSETEPFFKYKSSVSSRELGNESGKEDVSIQNK.

The [4Fe-4S] cluster site is built by C43, C44, C108, and C139. Residues K217–K239 are disordered. Residues L225–K239 show a composition bias toward basic and acidic residues.

The protein belongs to the complex I 20 kDa subunit family. NDH is composed of at least 16 different subunits, 5 of which are encoded in the nucleus. [4Fe-4S] cluster serves as cofactor.

It localises to the plastid. It is found in the chloroplast thylakoid membrane. The catalysed reaction is a plastoquinone + NADH + (n+1) H(+)(in) = a plastoquinol + NAD(+) + n H(+)(out). It carries out the reaction a plastoquinone + NADPH + (n+1) H(+)(in) = a plastoquinol + NADP(+) + n H(+)(out). In terms of biological role, NDH shuttles electrons from NAD(P)H:plastoquinone, via FMN and iron-sulfur (Fe-S) centers, to quinones in the photosynthetic chain and possibly in a chloroplast respiratory chain. The immediate electron acceptor for the enzyme in this species is believed to be plastoquinone. Couples the redox reaction to proton translocation, and thus conserves the redox energy in a proton gradient. The protein is NAD(P)H-quinone oxidoreductase subunit K, chloroplastic of Acorus calamus var. americanus (American sweet flag).